The following is a 366-amino-acid chain: Probable UDP-arabinopyranose mutase 2 (366 aa).

The DXD motif motif lies at 104 to 106; that stretch reads DDD. Arginine 152 carries an N-linked (Glc...) arginine glycan.

Belongs to the RGP family. In terms of assembly, homopentamer or homohexamer. Requires Mn(2+) as cofactor. Mg(2+) serves as cofactor. In terms of processing, reversibly glycosylated by UDP-glucose, UDP-xylose and UDP-galactose, but not UDP-mannose. As to expression, expressed in all tissues tested, including root, tuber, leaf, petiole, shoot, stolon and stem.

It localises to the secreted. The protein localises to the cell wall. The protein resides in the cell junction. It is found in the plasmodesma. Its subcellular location is the golgi apparatus. The enzyme catalyses UDP-beta-L-arabinofuranose = UDP-beta-L-arabinopyranose. Probable UDP-L-arabinose mutase involved in the biosynthesis of cell wall non-cellulosic polysaccharides. Was initially shown to possess an autoglycosylating activity which is dependent on the presence of UDP-glucose and manganese. This is Probable UDP-arabinopyranose mutase 2 from Solanum tuberosum (Potato).